Reading from the N-terminus, the 30-residue chain is Bowman-Birk type proteinase inhibitor 4 (30 aa).

2 disulfides stabilise this stretch: cysteine 9–cysteine 24 and cysteine 14–cysteine 22.

Its function is as follows. Inhibits trypsin (IC(50)=17.60 nM) and, to a lesser extent, alpha-chymotrypsin (IC(50)=2.38 uM). This is Bowman-Birk type proteinase inhibitor 4 from Lathyrus sativus (White vetchling).